The sequence spans 385 residues: 3-hydroxyisobutyryl-CoA hydrolase, mitochondrial (385 aa).

Residues 1–32 (MGQPYAWRLLSRVSSFRRASVILQHLRMSMHT) constitute a mitochondrion transit peptide. Residues K54, K91, and K100 each carry the N6-acetyllysine; alternate modification. An N6-succinyllysine; alternate mark is found at K54, K91, and K100. Substrate contacts are provided by E120, G145, E168, and D176. N6-acetyllysine; alternate is present on K220. At K220 the chain carries N6-succinyllysine; alternate. Residue S233 is modified to Phosphoserine. K249 and K256 each carry N6-succinyllysine. K296 is subject to N6-acetyllysine; alternate. K296 is subject to N6-succinyllysine; alternate. An N6-succinyllysine modification is found at K300. An N6-acetyllysine; alternate modification is found at K352. K352 is subject to N6-succinyllysine; alternate. 2 positions are modified to N6-acetyllysine: K359 and K364. K376 carries the N6-succinyllysine modification.

It belongs to the enoyl-CoA hydratase/isomerase family.

It localises to the mitochondrion. It carries out the reaction 3-hydroxy-2-methylpropanoyl-CoA + H2O = 3-hydroxy-2-methylpropanoate + CoA + H(+). It participates in amino-acid degradation; L-valine degradation. Hydrolyzes 3-hydroxyisobutyryl-CoA (HIBYL-CoA), a saline catabolite. Has high activity toward isobutyryl-CoA. Could be an isobutyryl-CoA dehydrogenase that functions in valine catabolism. Also hydrolyzes 3-hydroxypropanoyl-CoA. The sequence is that of 3-hydroxyisobutyryl-CoA hydrolase, mitochondrial (Hibch) from Mus musculus (Mouse).